Here is a 466-residue protein sequence, read N- to C-terminus: Ribulose bisphosphate carboxylase large chain (466 aa).

K5 is subject to N6,N6,N6-trimethyllysine. N114 and T164 together coordinate substrate. The active-site Proton acceptor is the K166. K168 serves as a coordination point for substrate. Residues K192, D194, and E195 each contribute to the Mg(2+) site. K192 is subject to N6-carboxylysine. H285 functions as the Proton acceptor in the catalytic mechanism. The substrate site is built by R286, H318, and S370.

It belongs to the RuBisCO large chain family. Type I subfamily. Heterohexadecamer of 8 large chains and 8 small chains; disulfide-linked. The disulfide link is formed within the large subunit homodimers. Requires Mg(2+) as cofactor. The disulfide bond which can form in the large chain dimeric partners within the hexadecamer appears to be associated with oxidative stress and protein turnover.

It localises to the plastid. It is found in the chloroplast. The catalysed reaction is 2 (2R)-3-phosphoglycerate + 2 H(+) = D-ribulose 1,5-bisphosphate + CO2 + H2O. The enzyme catalyses D-ribulose 1,5-bisphosphate + O2 = 2-phosphoglycolate + (2R)-3-phosphoglycerate + 2 H(+). In terms of biological role, ruBisCO catalyzes two reactions: the carboxylation of D-ribulose 1,5-bisphosphate, the primary event in carbon dioxide fixation, as well as the oxidative fragmentation of the pentose substrate in the photorespiration process. Both reactions occur simultaneously and in competition at the same active site. The sequence is that of Ribulose bisphosphate carboxylase large chain from Drosera peltata (Pale sundew).